The sequence spans 571 residues: Serine/threonine-protein kinase Nek7 (571 aa).

One can recognise a Protein kinase domain in the interval 19 to 277 (YHVVEQVRRG…LRNPSLQPYL (259 aa)). ATP is bound by residues 25 to 33 (VRRGKSSSD) and Lys-48. Residue Asp-144 is the Proton acceptor of the active site. 2 disordered regions span residues 298 to 321 (SPKD…SREK) and 338 to 363 (TETG…ETKR). A compositionally biased stretch (basic and acidic residues) spans 312–321 (FGKERVSREK). Over residues 342–351 (SSSSSQPASS) the composition is skewed to low complexity.

It belongs to the protein kinase superfamily. NEK Ser/Thr protein kinase family. NIMA subfamily.

The catalysed reaction is L-seryl-[protein] + ATP = O-phospho-L-seryl-[protein] + ADP + H(+). The enzyme catalyses L-threonyl-[protein] + ATP = O-phospho-L-threonyl-[protein] + ADP + H(+). May be involved in plant development processes. The polypeptide is Serine/threonine-protein kinase Nek7 (NEK7) (Arabidopsis thaliana (Mouse-ear cress)).